The primary structure comprises 420 residues: UDP-N-acetylglucosamine 1-carboxyvinyltransferase (420 aa).

22 to 23 (KN) is a phosphoenolpyruvate binding site. Arg94 contacts UDP-N-acetyl-alpha-D-glucosamine. Cys118 functions as the Proton donor in the catalytic mechanism. Cys118 carries the post-translational modification 2-(S-cysteinyl)pyruvic acid O-phosphothioketal. Residues Asp307 and Ile329 each contribute to the UDP-N-acetyl-alpha-D-glucosamine site.

It belongs to the EPSP synthase family. MurA subfamily.

Its subcellular location is the cytoplasm. It carries out the reaction phosphoenolpyruvate + UDP-N-acetyl-alpha-D-glucosamine = UDP-N-acetyl-3-O-(1-carboxyvinyl)-alpha-D-glucosamine + phosphate. It functions in the pathway cell wall biogenesis; peptidoglycan biosynthesis. Cell wall formation. Adds enolpyruvyl to UDP-N-acetylglucosamine. The protein is UDP-N-acetylglucosamine 1-carboxyvinyltransferase of Gluconacetobacter diazotrophicus (strain ATCC 49037 / DSM 5601 / CCUG 37298 / CIP 103539 / LMG 7603 / PAl5).